The primary structure comprises 183 residues: Ribosome-recycling factor (183 aa).

This sequence belongs to the RRF family.

It localises to the cytoplasm. In terms of biological role, responsible for the release of ribosomes from messenger RNA at the termination of protein biosynthesis. May increase the efficiency of translation by recycling ribosomes from one round of translation to another. This Treponema pallidum (strain Nichols) protein is Ribosome-recycling factor.